The primary structure comprises 107 residues: Neuroparsin-A (107 aa).

A signal peptide spans 1 to 22; the sequence is MKATAALVAATLLLAVTLFHRA. Residues 23–24 constitute a propeptide that is removed on maturation; that stretch reads ER.

As to quaternary structure, homodimer; disulfide-linked.

Its function is as follows. Neurosparins are multifunctional neurohormones: they inhibit the effects of juvenile hormone, stimulate fluid reabsorption of isolated recta and induces an increase in hemolymph lipid and trehalose levels. In Locusta migratoria (Migratory locust), this protein is Neuroparsin-A.